The chain runs to 124 residues: Large ribosomal subunit protein bL12 (124 aa).

It belongs to the bacterial ribosomal protein bL12 family. As to quaternary structure, homodimer. Part of the ribosomal stalk of the 50S ribosomal subunit. Forms a multimeric L10(L12)X complex, where L10 forms an elongated spine to which 2 to 4 L12 dimers bind in a sequential fashion. Binds GTP-bound translation factors.

Forms part of the ribosomal stalk which helps the ribosome interact with GTP-bound translation factors. Is thus essential for accurate translation. The chain is Large ribosomal subunit protein bL12 from Brucella anthropi (strain ATCC 49188 / DSM 6882 / CCUG 24695 / JCM 21032 / LMG 3331 / NBRC 15819 / NCTC 12168 / Alc 37) (Ochrobactrum anthropi).